The following is an 808-amino-acid chain: Protein tortoise (808 aa).

The stretch at 43 to 78 (KDRKELYSLNNDSIKKKLNQLKDETNQLLKERGEEL) forms a coiled coil. The disordered stretch occupies residues 152 to 171 (LTSGGANKKKSPFLEDNNNK). The stretch at 694-733 (EDLDFQIEELELMIKNKKILEREIKAHNEKISKIIKDSRD) forms a coiled coil.

Its subcellular location is the mitochondrion. Its function is as follows. Required for efficient chemotaxis. The protein is Protein tortoise (torA) of Dictyostelium discoideum (Social amoeba).